Reading from the N-terminus, the 590-residue chain is Arginine--tRNA ligase (590 aa).

The 'HIGH' region signature appears at 138–148 (ANPTGPLHIGH).

It belongs to the class-I aminoacyl-tRNA synthetase family. As to quaternary structure, monomer.

The protein resides in the cytoplasm. It carries out the reaction tRNA(Arg) + L-arginine + ATP = L-arginyl-tRNA(Arg) + AMP + diphosphate. The chain is Arginine--tRNA ligase from Orientia tsutsugamushi (strain Boryong) (Rickettsia tsutsugamushi).